Consider the following 74-residue polypeptide: Mitotic-spindle organizing protein 1 (74 aa).

This sequence belongs to the MOZART1 family. In terms of assembly, part of the gamma-tubulin complex.

The protein localises to the cytoplasm. The protein resides in the cytoskeleton. Its subcellular location is the microtubule organizing center. It is found in the spindle pole body. In terms of biological role, required for gamma-tubulin complex recruitment to the microtubule organizing center (MTOC). In Emericella nidulans (strain FGSC A4 / ATCC 38163 / CBS 112.46 / NRRL 194 / M139) (Aspergillus nidulans), this protein is Mitotic-spindle organizing protein 1.